Here is a 658-residue protein sequence, read N- to C-terminus: MLAGCSSSSLLSPTRRLRSEAVAATSATVSAHFPMNTQRLDLPCSSSFSRKETPSSRPLGRSISLDNSNNNNNKPIERKTKTSGCSLKQNIKLPPLATTRGNGEGFSWNNDNNNRGKSLKRLAEEDESCLSRAKRTKCENEGGFWFEHFTGQDSSSPALPFSLTCSGDDEEKVCFVPSEVISQPLPNWVDSVITELAGIGDKDVESSLPAAVKEASGGSSTSASSESRSLSHRVPEPTNGSRNPYSHRGATEERTTGNINNNNNRNDLQRDFELVNLLTGCLDAIRSRNIAAINHFIARTGDLASPRGRTPMTRLIAYYIEALALRVARMWPHIFHIAPPREFDRTVEDESGNALRFLNQVTPIPKFIHFTANEMLLRAFEGKERVHIIDFDIKQGLQWPSFFQSLASRINPPHHVRITGIGESKLELNETGDRLHGFAEAMNLQFEFHPVVDRLEDVRLWMLHVKEGESVAVNCVMQMHKTLYDGTGAAIRDFLGLIRSTNPIALVLAEQEAEHNSEQLETRVCNSLKYYSAMFDAIHTNLATDSLMRVKVEEMLFGREIRNIVACEGSHRQERHVGFRHWRRMLEQLGFRSLGVSEREVLQSKMLLRMYGSDNEGFFNVERSDEDNGGEGGRGGGVTLRWSEQPLYTISAWTTGGN.

3 disordered regions span residues Pro-43 to Cys-85, Leu-96 to Arg-115, and Pro-209 to Arg-265. Residues Glu-214–Arg-228 show a composition bias toward low complexity. Residues Arg-265–Thr-654 enclose the GRAS domain. The tract at residues Phe-272–His-336 is leucine repeat I (LRI). The segment at Leu-355 to Gly-420 is VHIID. The VHIID signature appears at Val-386 to Asp-390. The tract at residues Glu-430–Met-462 is leucine repeat II (LRII). Positions Val-471 to Asn-563 are PFYRE. Residues Ala-566–Thr-654 are SAW.

Belongs to the GRAS family. In terms of assembly, interacts with SNRNP35 and CYP95. In terms of tissue distribution, expressed in roots and sepals.

The protein localises to the nucleus. Functionally, probable transcription factor involved in plant development. This Arabidopsis thaliana (Mouse-ear cress) protein is Scarecrow-like protein 28 (SCL28).